The chain runs to 153 residues: Histone H2B.3 (153 aa).

Over residues 1–28 (MAPKADKKPAAKKPAEEEPATEKAEKAP) the composition is skewed to basic and acidic residues. Residues 1–60 (MAPKADKKPAAKKPAEEEPATEKAEKAPAGKKPKAEKRLPAGKSAGKEGGEGKKGKKKAK) are disordered. Residues K7 and K37 each carry the N6-acetyllysine modification. K149 participates in a covalent cross-link: Glycyl lysine isopeptide (Lys-Gly) (interchain with G-Cter in ubiquitin).

This sequence belongs to the histone H2B family. The nucleosome is a histone octamer containing two molecules each of H2A, H2B, H3 and H4 assembled in one H3-H4 heterotetramer and two H2A-H2B heterodimers. The octamer wraps approximately 147 bp of DNA. Can be acetylated to form H2BK6ac and H2BK33ac. In terms of processing, monoubiquitinated to form H2BK143ub1; may give a specific tag for epigenetic transcriptional activation.

It localises to the nucleus. The protein localises to the chromosome. Functionally, core component of nucleosome. Nucleosomes wrap and compact DNA into chromatin, limiting DNA accessibility to the cellular machineries which require DNA as a template. Histones thereby play a central role in transcription regulation, DNA repair, DNA replication and chromosomal stability. DNA accessibility is regulated via a complex set of post-translational modifications of histones, also called histone code, and nucleosome remodeling. In Zea mays (Maize), this protein is Histone H2B.3.